The sequence spans 93 residues: Guanine nucleotide-binding protein subunit gamma (93 aa).

The disordered stretch occupies residues 1–22; that stretch reads MPQYASRDVGDPSQIKKNKQSM. The S-palmitoyl cysteine moiety is linked to residue Cys89. Cys90 carries the cysteine methyl ester modification. Residue Cys90 is the site of S-farnesyl cysteine attachment. A propeptide spans 91–93 (removed in mature form); it reads VVM.

It belongs to the G protein gamma family. In terms of assembly, g proteins are composed of 3 units, alpha, beta and gamma.

The protein localises to the membrane. This chain is Guanine nucleotide-binding protein subunit gamma (gng-1), found in Neurospora crassa (strain ATCC 24698 / 74-OR23-1A / CBS 708.71 / DSM 1257 / FGSC 987).